The chain runs to 306 residues: tRNA (guanine-N(7)-)-methyltransferase (306 aa).

Over residues 1 to 19 (MSSTAPLDSKATEQITTAA) the composition is skewed to polar residues. Residues 1–65 (MSSTAPLDSK…EASPELPSDE (65 aa)) are disordered. S-adenosyl-L-methionine contacts are provided by residues G121, 144–145 (EI), 180–181 (NA), and C200. D203 is a catalytic residue. S-adenosyl-L-methionine is bound at residue 278-280 (TEE).

This sequence belongs to the class I-like SAM-binding methyltransferase superfamily. TrmB family. In terms of assembly, forms a complex with TRM82.

It is found in the nucleus. The catalysed reaction is guanosine(46) in tRNA + S-adenosyl-L-methionine = N(7)-methylguanosine(46) in tRNA + S-adenosyl-L-homocysteine. It participates in tRNA modification; N(7)-methylguanine-tRNA biosynthesis. Its function is as follows. Catalyzes the formation of N(7)-methylguanine at position 46 (m7G46) in tRNA. This chain is tRNA (guanine-N(7)-)-methyltransferase, found in Lodderomyces elongisporus (strain ATCC 11503 / CBS 2605 / JCM 1781 / NBRC 1676 / NRRL YB-4239) (Yeast).